Reading from the N-terminus, the 449-residue chain is Ribulose bisphosphate carboxylase large chain (449 aa).

Positions 1–2 (MS) are excised as a propeptide. P3 is subject to N-acetylproline. K14 carries the post-translational modification N6,N6,N6-trimethyllysine. Positions 123 and 173 each coordinate substrate. The active-site Proton acceptor is the K175. K177 provides a ligand contact to substrate. Mg(2+) is bound by residues K201, D203, and E204. At K201 the chain carries N6-carboxylysine. The Proton acceptor role is filled by H294. The substrate site is built by R295, H327, and S379.

The protein belongs to the RuBisCO large chain family. Type I subfamily. As to quaternary structure, heterohexadecamer of 8 large chains and 8 small chains; disulfide-linked. The disulfide link is formed within the large subunit homodimers. The cofactor is Mg(2+). Post-translationally, the disulfide bond which can form in the large chain dimeric partners within the hexadecamer appears to be associated with oxidative stress and protein turnover.

Its subcellular location is the plastid. The protein resides in the chloroplast. The catalysed reaction is 2 (2R)-3-phosphoglycerate + 2 H(+) = D-ribulose 1,5-bisphosphate + CO2 + H2O. It catalyses the reaction D-ribulose 1,5-bisphosphate + O2 = 2-phosphoglycolate + (2R)-3-phosphoglycerate + 2 H(+). In terms of biological role, ruBisCO catalyzes two reactions: the carboxylation of D-ribulose 1,5-bisphosphate, the primary event in carbon dioxide fixation, as well as the oxidative fragmentation of the pentose substrate in the photorespiration process. Both reactions occur simultaneously and in competition at the same active site. This Hippocratea richardiana protein is Ribulose bisphosphate carboxylase large chain.